The primary structure comprises 309 residues: Taste receptor type 2 member 46 (309 aa).

A topological domain (extracellular) is located at residue Met1. The helical transmembrane segment at 2–22 threads the bilayer; it reads ITFLPIIFSILIVVTFVIGNF. Residues 23 to 46 are Cytoplasmic-facing; sequence ANGFIALVNSIEWFKRQKISFADQ. The chain crosses the membrane as a helical span at residues 47–67; sequence ILTALAVSRVGLLWVLVLNWY. The Extracellular portion of the chain corresponds to 68 to 86; that stretch reads ATELNPAFNSIEVRITAYN. Residues 87 to 107 traverse the membrane as a helical segment; sequence VWAVINHFSNWLATSLSIFYL. Residues 108–126 are Cytoplasmic-facing; sequence LKIANFSNLIFLHLKRRVK. A helical membrane pass occupies residues 127 to 147; it reads SVVLVILLGPLLFLVCHLFVI. At 148 to 178 the chain is on the extracellular side; sequence NMNQIIWTKEYEGNMTWKIKLRSAMYLSNTT. Asn161 and Asn176 each carry an N-linked (GlcNAc...) asparagine glycan. A helical membrane pass occupies residues 179-199; the sequence is VTILANLVPFTLTLISFLLLI. The Cytoplasmic segment spans residues 200–229; that stretch reads CSLCKHLKKMQLHGKGSQDPSMKVHIKALQ. The chain crosses the membrane as a helical span at residues 230 to 250; sequence TVTSFLLLCAIYFLSIIMSVW. At 251–259 the chain is on the extracellular side; sequence SFESLENKP. A helical transmembrane segment spans residues 260-280; the sequence is VFMFCEAIAFSYPSTHPFILI. Residues 281 to 309 are Cytoplasmic-facing; sequence WGNKKLKQTFLSVLWHVRYWVKGEKPSSS.

Belongs to the G-protein coupled receptor T2R family. As to expression, expressed in subsets of taste receptor cells of the tongue and exclusively in gustducin-positive cells. Expressed on ciliated airway epithelium.

It is found in the membrane. The protein resides in the cell projection. Its subcellular location is the cilium membrane. Functionally, receptor that may play a role in the perception of bitterness and is gustducin-linked. May play a role in sensing the chemical composition of the gastrointestinal content. The activity of this receptor may stimulate alpha gustducin, mediate PLC-beta-2 activation and lead to the gating of TRPM5. In airway epithelial cells, binding of bitter compounds increases the intracellular calcium ion concentration and stimulates ciliary beat frequency. The sequence is that of Taste receptor type 2 member 46 (TAS2R46) from Homo sapiens (Human).